The chain runs to 479 residues: MPRFVDRVVIHTWAGSGGNGCASIHRSKFKPLGGPDGGNGGRGGSVVFVVDPHVHTLLDFHFRPHITAPSGKQGMGNNRDGAAGADLEVKVPDGTVVLDEDGRLLADLVGAGTRFQAAAGGRGGLGNAALASRTRKVPGFALLGEQGESRDLTLELKSVADVGLIGFPSAGKSSLVSVISAAKPKIADYPFTTLVPNLGVVSVGEHAFTVADVPGLIPGASAGRGLGLDFLRHIERCAVLVHVVDCTSVEPGRDPILDIAALEAELAAYTPTLQGDTTLGDFAERPRAVVLNKIDVPDARELAEFVCDNIAAERGWPVFSVSTVTRENLQSLIFGLWQMISAYHAARSEPAPGRSLIRPVPVDDSGFTVEPDGQGGFVVTGTRPERWIHQTNFDNAEAVGYLADRLARLGVEDELLRVGAQPGCTVSIGGMTFDWEPQKPAGHPVAMSGRGTDARLESTDPVGTAERKVARHQRHKHGG.

Positions 2–159 constitute an Obg domain; the sequence is PRFVDRVVIH…RDLTLELKSV (158 aa). The OBG-type G domain maps to 160–341; the sequence is ADVGLIGFPS…LIFGLWQMIS (182 aa). Residues 166–173, 191–195, 212–215, 292–295, and 322–324 contribute to the GTP site; these read GFPSAGKS, FTTLV, DVPG, NKID, and STV. Residues Ser173 and Thr193 each contribute to the Mg(2+) site. The region spanning 359–437 is the OCT domain; sequence PVPVDDSGFT…IGGMTFDWEP (79 aa). Residues 438-479 form a disordered region; the sequence is QKPAGHPVAMSGRGTDARLESTDPVGTAERKVARHQRHKHGG. Residues 469 to 479 are compositionally biased toward basic residues; that stretch reads VARHQRHKHGG.

This sequence belongs to the TRAFAC class OBG-HflX-like GTPase superfamily. OBG GTPase family. Monomer. Mg(2+) serves as cofactor.

The protein localises to the cytoplasm. In terms of biological role, an essential GTPase which binds GTP, GDP and possibly (p)ppGpp with moderate affinity, with high nucleotide exchange rates and a fairly low GTP hydrolysis rate. Plays a role in control of the cell cycle, stress response, ribosome biogenesis and in those bacteria that undergo differentiation, in morphogenesis control. In Mycobacterium leprae (strain Br4923), this protein is GTPase Obg.